Consider the following 464-residue polypeptide: 3-deoxy-D-manno-octulosonic acid transferase (464 aa).

A helical; Signal-anchor transmembrane segment spans residues 2–22; that stretch reads MLLYYALSFILLPVYFIIILI. The region spanning 47–93 is the RPE1 insert domain; sequence DSLDFMQTSANKEEFKGDTSLRTTTYTLIREDEGLGSTYKLPLEASD. Glu107 (proton acceptor) is an active-site residue. Residues 311–312, 352–354, and 377–380 contribute to the CMP site; these read PR, FGE, and NILE.

Belongs to the glycosyltransferase group 1 family. Glycosyltransferase 30 subfamily.

It is found in the cell inner membrane. The enzyme catalyses lipid IVA (E. coli) + CMP-3-deoxy-beta-D-manno-octulosonate = alpha-Kdo-(2-&gt;6)-lipid IVA (E. coli) + CMP + H(+). It functions in the pathway bacterial outer membrane biogenesis; LPS core biosynthesis. Involved in lipopolysaccharide (LPS) biosynthesis. Catalyzes the transfer of 3-deoxy-D-manno-octulosonate (Kdo) residue(s) from CMP-Kdo to lipid IV(A), the tetraacyldisaccharide-1,4'-bisphosphate precursor of lipid A. The protein is 3-deoxy-D-manno-octulosonic acid transferase (waaA) of Rickettsia conorii (strain ATCC VR-613 / Malish 7).